The sequence spans 129 residues: Small ribosomal subunit protein uS12 (129 aa).

2 disordered regions span residues Met-1–Glu-25 and Arg-110–Lys-129. The segment covering Phe-10–Lys-20 has biased composition (basic residues).

It belongs to the universal ribosomal protein uS12 family. As to quaternary structure, part of the 30S ribosomal subunit. Contacts proteins S8 and S17. May interact with IF1 in the 30S initiation complex.

Its function is as follows. With S4 and S5 plays an important role in translational accuracy. Functionally, interacts with and stabilizes bases of the 16S rRNA that are involved in tRNA selection in the A site and with the mRNA backbone. Located at the interface of the 30S and 50S subunits, it traverses the body of the 30S subunit contacting proteins on the other side and probably holding the rRNA structure together. The combined cluster of proteins S8, S12 and S17 appears to hold together the shoulder and platform of the 30S subunit. The protein is Small ribosomal subunit protein uS12 of Rickettsia conorii (strain ATCC VR-613 / Malish 7).